The primary structure comprises 459 residues: Pentatricopeptide repeat-containing protein At1g07740, mitochondrial (459 aa).

The N-terminal 20 residues, 1–20, are a transit peptide targeting the mitochondrion; it reads MRRRLSSVLINNQCIASQRH. The interval 19–41 is disordered; it reads RHYHTSRPEKPTKKASSHEPTHK. The segment covering 24–41 has biased composition (basic and acidic residues); the sequence is SRPEKPTKKASSHEPTHK. PPR repeat units lie at residues 80 to 114, 115 to 149, 150 to 184, 185 to 219, 220 to 254, 255 to 289, 290 to 324, 325 to 359, 360 to 394, and 395 to 429; these read DYPSYSSLIYKLAKSRNFDAVDQILRLVRYRNVRC, RESLFMGLIQHYGKAGSVDKAIDVFHKITSFDCVR, TIQSLNTLINVLVDNGELEKAKSFFDGAKDMRLRP, NSVSFNILIKGFLDKCDWEAACKVFDEMLEMEVQP, SVVTYNSLIGFLCRNDDMGKAKSLLEDMIKKRIRP, NAVTFGLLMKGLCCKGEYNEAKKLMFDMEYRGCKP, GLVNYGILMSDLGKRGRIDEAKLLLGEMKKRRIKP, DVVIYNILVNHLCTECRVPEAYRVLTEMQMKGCKP, NAATYRMMIDGFCRIEDFDSGLNVLNAMLASRHCP, and TPATFVCMVAGLIKGGNLDHACFVLEVMGKKNLSF.

Belongs to the PPR family. P subfamily.

It localises to the mitochondrion. This chain is Pentatricopeptide repeat-containing protein At1g07740, mitochondrial, found in Arabidopsis thaliana (Mouse-ear cress).